The chain runs to 327 residues: Metal-binding protein YtgA (327 aa).

The signal sequence occupies residues 1–20 (MDAKMGYIFKVMRWIFCFVA). Fe(2+)-binding residues include H73, H139, H205, and D297.

This sequence belongs to the bacterial solute-binding protein 9 family. Monomer.

It is found in the periplasm. Its function is as follows. Part of the ATP-binding cassette (ABC) transport system YtgABCD involved in metal import. Binds Fe(2+), Mn(2+) and Ni(2+), with a preference for Fe(2+) and delivers them to the membrane permease for translocation into the cytoplasm. This is Metal-binding protein YtgA from Chlamydia pneumoniae (Chlamydophila pneumoniae).